We begin with the raw amino-acid sequence, 3305 residues long: Microtubule-actin cross-linking factor 1, isoforms 6/7 (3305 aa).

Disordered regions lie at residues 1–24 (MGKPLSRPDCLRRNPTCLGKGEDE), 108–140 (VQKSAPVPPRRRPNAERKDNVNRRSWKSFMPPN), 152–202 (LSEV…KSVD), 239–272 (AAASGNTDEMQEHRFSSATWPRAMKSSSKGGFSE), 333–381 (EEWE…VAVS), 941–1007 (EPAI…PEWS), and 2865–2896 (SVEPTHAPFMEKSRSGSRKSLNQPTPPPMPIL). Over residues 120–129 (PNAERKDNVN) the composition is skewed to basic and acidic residues. EF-hand domains are found at residues 2958–2993 (HKKSRVMDFFRRIDKDQDGKITRQEFIDGILASKFP) and 2994–3029 (TTKLEMTAVADIFDRDGDGYIDYYEFVAALHPNKDA). Ca(2+) contacts are provided by Asp-2971, Asp-2973, Asp-2975, Lys-2977, Glu-2982, Asp-3007, Asp-3009, Asp-3011, Tyr-3013, and Glu-3018. The GAR domain maps to 3034-3106 (TDADKIEDEV…EFLVKNDPCR (73 aa)). The segment at 3122-3305 (PEGASQGMTP…ASPRTPGPKR (184 aa)) is disordered. The segment covering 3142–3176 (SSRAASPTRSSSSASQSNHSCTSMPSSPATPASGT) has biased composition (low complexity). Residues 3193-3212 (FHSSRTSLAGDTSNSSSPAS) are compositionally biased toward polar residues. Residues 3227 to 3241 (SRPGSRAGSRAGSRA) show a composition bias toward low complexity. Residues 3256–3266 (ETQSACSDTSE) show a composition bias toward polar residues. Positions 3267–3278 (SSAAGGQGSSRR) are enriched in low complexity.

The protein resides in the cytoplasm. The protein localises to the cytoskeleton. The protein is Microtubule-actin cross-linking factor 1, isoforms 6/7 of Mus musculus (Mouse).